The chain runs to 101 residues: Protein Tat (101 aa).

Residues 1–24 form an interaction with human CREBBP region; sequence MEPVDPNREPWNHPGSQPKTACTN. Positions 1 to 48 are transactivation; it reads MEPVDPNREPWNHPGSQPKTACTNCYCKKCCYHCQVCFLQKGLGISYG. Residues Cys-22, Cys-25, and Cys-27 each coordinate Zn(2+). A cysteine-rich region spans residues 22–37; sequence CTNCYCKKCCYHCQVC. Lys-28 is subject to N6-acetyllysine; by host PCAF. Zn(2+)-binding residues include Cys-30, His-33, Cys-34, and Cys-37. The interval 38 to 48 is core; it reads FLQKGLGISYG. The tract at residues 48-101 is disordered; that stretch reads GRKKRRQRRSAPPGSKTHQDLIPKQPLSQTQRKPTGPEESKKEVESKAEPDRFD. The short motif at 49 to 57 is the Nuclear localization signal, RNA-binding (TAR), and protein transduction element; it reads RKKRRQRRS. The segment at 49–86 is interaction with the host capping enzyme RNGTT; the sequence is RKKRRQRRSAPPGSKTHQDLIPKQPLSQTQRKPTGPEE. N6-acetyllysine; by host EP300 and GCN5L2 occurs at positions 50 and 51. Arg-52 and Arg-53 each carry asymmetric dimethylarginine; by host PRMT6. Lys-71 is covalently cross-linked (Glycyl lysine isopeptide (Lys-Gly) (interchain with G-Cter in ubiquitin)). Residues 82–101 are compositionally biased toward basic and acidic residues; the sequence is TGPEESKKEVESKAEPDRFD.

The protein belongs to the lentiviruses Tat family. In terms of assembly, interacts with host CCNT1. Associates with the P-TEFb complex composed at least of Tat, P-TEFb (CDK9 and CCNT1), TAR RNA, RNA Pol II. Recruits the HATs CREBBP, TAF1/TFIID, EP300, PCAF and GCN5L2. Interacts with host KAT5/Tip60; this interaction targets the latter to degradation. Interacts with the host deacetylase SIRT1. Interacts with host capping enzyme RNGTT; this interaction stimulates RNGTT. Binds to host KDR, and to the host integrins ITGAV/ITGB3 and ITGA5/ITGB1. Interacts with host KPNB1/importin beta-1 without previous binding to KPNA1/importin alpha-1. Interacts with EIF2AK2. Interacts with host nucleosome assembly protein NAP1L1; this interaction may be required for the transport of Tat within the nucleus, since the two proteins interact at the nuclear rim. Interacts with host C1QBP/SF2P32; this interaction involves lysine-acetylated Tat. Interacts with the host chemokine receptors CCR2, CCR3 and CXCR4. Interacts with host DPP4/CD26; this interaction may trigger an anti-proliferative effect. Interacts with host LDLR. Interacts with the host extracellular matrix metalloproteinase MMP1. Interacts with host PRMT6; this interaction mediates Tat's methylation. Interacts with, and is ubiquitinated by MDM2/Hdm2. Interacts with host PSMC3 and HTATIP2. Interacts with STAB1; this interaction may overcome SATB1-mediated repression of IL2 and IL2RA (interleukin) in T cells by binding to the same domain than HDAC1. Interacts (when acetylated) with human CDK13, thereby increasing HIV-1 mRNA splicing and promoting the production of the doubly spliced HIV-1 protein Nef. Interacts with host TBP; this interaction modulates the activity of transcriptional pre-initiation complex. Interacts with host RELA. Interacts with host PLSCR1; this interaction negatively regulates Tat transactivation activity by altering its subcellular distribution. In terms of processing, asymmetrical arginine methylation by host PRMT6 seems to diminish the transactivation capacity of Tat and affects the interaction with host CCNT1. Acetylation by EP300, CREBBP, GCN5L2/GCN5 and PCAF regulates the transactivation activity of Tat. EP300-mediated acetylation of Lys-50 promotes dissociation of Tat from the TAR RNA through the competitive binding to PCAF's bromodomain. In addition, the non-acetylated Tat's N-terminus can also interact with PCAF. PCAF-mediated acetylation of Lys-28 enhances Tat's binding to CCNT1. Lys-50 is deacetylated by SIRT1. Post-translationally, polyubiquitination by host MDM2 does not target Tat to degradation, but activates its transactivation function and fosters interaction with CCNT1 and TAR RNA. In terms of processing, phosphorylated by EIF2AK2 on serine and threonine residues adjacent to the basic region important for TAR RNA binding and function. Phosphorylation of Tat by EIF2AK2 is dependent on the prior activation of EIF2AK2 by dsRNA.

Its subcellular location is the host nucleus. It localises to the host nucleolus. The protein localises to the host cytoplasm. It is found in the secreted. Its function is as follows. Transcriptional activator that increases RNA Pol II processivity, thereby increasing the level of full-length viral transcripts. Recognizes a hairpin structure at the 5'-LTR of the nascent viral mRNAs referred to as the transactivation responsive RNA element (TAR) and recruits the cyclin T1-CDK9 complex (P-TEFb complex) that will in turn hyperphosphorylate the RNA polymerase II to allow efficient elongation. The CDK9 component of P-TEFb and other Tat-activated kinases hyperphosphorylate the C-terminus of RNA Pol II that becomes stabilized and much more processive. Other factors such as HTATSF1/Tat-SF1, SUPT5H/SPT5, and HTATIP2 are also important for Tat's function. Besides its effect on RNA Pol II processivity, Tat induces chromatin remodeling of proviral genes by recruiting the histone acetyltransferases (HATs) CREBBP, EP300 and PCAF to the chromatin. This also contributes to the increase in proviral transcription rate, especially when the provirus integrates in transcriptionally silent region of the host genome. To ensure maximal activation of the LTR, Tat mediates nuclear translocation of NF-kappa-B by interacting with host RELA. Through its interaction with host TBP, Tat may also modulate transcription initiation. Tat can reactivate a latently infected cell by penetrating in it and transactivating its LTR promoter. In the cytoplasm, Tat is thought to act as a translational activator of HIV-1 mRNAs. Extracellular circulating Tat can be endocytosed by surrounding uninfected cells via the binding to several surface receptors such as CD26, CXCR4, heparan sulfate proteoglycans (HSPG) or LDLR. Neurons are rarely infected, but they internalize Tat via their LDLR. Through its interaction with nuclear HATs, Tat is potentially able to control the acetylation-dependent cellular gene expression. Modulates the expression of many cellular genes involved in cell survival, proliferation or in coding for cytokines or cytokine receptors. Tat plays a role in T-cell and neurons apoptosis. Tat induced neurotoxicity and apoptosis probably contribute to neuroAIDS. Circulating Tat also acts as a chemokine-like and/or growth factor-like molecule that binds to specific receptors on the surface of the cells, affecting many cellular pathways. In the vascular system, Tat binds to ITGAV/ITGB3 and ITGA5/ITGB1 integrins dimers at the surface of endothelial cells and competes with bFGF for heparin-binding sites, leading to an excess of soluble bFGF. The chain is Protein Tat from Homo sapiens (Human).